The sequence spans 226 residues: V-type proton ATPase subunit E 2 (226 aa).

Belongs to the V-ATPase E subunit family. In terms of assembly, V-ATPase is a heteromultimeric enzyme made up of two complexes: the ATP-hydrolytic V1 complex and the proton translocation V0 complex. The V1 complex consists of three catalytic AB heterodimers that form a heterohexamer, three peripheral stalks each consisting of EG heterodimers, one central rotor including subunits D and F, and the regulatory subunits C and H. The proton translocation complex V0 consists of the proton transport subunit a, a ring of proteolipid subunits c9c'', rotary subunit d, subunits e and f, and the accessory subunits ATP6AP1/Ac45 and ATP6AP2/PRR. Testis specific.

Subunit of the V1 complex of vacuolar(H+)-ATPase (V-ATPase), a multisubunit enzyme composed of a peripheral complex (V1) that hydrolyzes ATP and a membrane integral complex (V0) that translocates protons. V-ATPase is responsible for acidifying and maintaining the pH of intracellular compartments and in some cell types, is targeted to the plasma membrane, where it is responsible for acidifying the extracellular environment. The protein is V-type proton ATPase subunit E 2 (ATP6V1E2) of Homo sapiens (Human).